Reading from the N-terminus, the 217-residue chain is Large ribosomal subunit protein uL1 (217 aa).

The protein belongs to the universal ribosomal protein uL1 family. As to quaternary structure, part of the 50S ribosomal subunit.

Its function is as follows. Binds directly to 23S rRNA. Probably involved in E site tRNA release. Functionally, protein L1 is also a translational repressor protein, it controls the translation of its operon by binding to its mRNA. The sequence is that of Large ribosomal subunit protein uL1 from Thermoplasma volcanium (strain ATCC 51530 / DSM 4299 / JCM 9571 / NBRC 15438 / GSS1).